A 131-amino-acid chain; its full sequence is Holo-[acyl-carrier-protein] synthase (131 aa).

Residues Asp-6 and Glu-55 each coordinate Mg(2+).

This sequence belongs to the P-Pant transferase superfamily. AcpS family. The cofactor is Mg(2+).

The protein localises to the cytoplasm. The catalysed reaction is apo-[ACP] + CoA = holo-[ACP] + adenosine 3',5'-bisphosphate + H(+). Transfers the 4'-phosphopantetheine moiety from coenzyme A to a Ser of acyl-carrier-protein. The protein is Holo-[acyl-carrier-protein] synthase of Verminephrobacter eiseniae (strain EF01-2).